The following is a 192-amino-acid chain: Crossover junction endodeoxyribonuclease RuvC (192 aa).

Active-site residues include Asp-8, Glu-67, and Asp-139. 3 residues coordinate Mg(2+): Asp-8, Glu-67, and Asp-139.

It belongs to the RuvC family. As to quaternary structure, homodimer which binds Holliday junction (HJ) DNA. The HJ becomes 2-fold symmetrical on binding to RuvC with unstacked arms; it has a different conformation from HJ DNA in complex with RuvA. In the full resolvosome a probable DNA-RuvA(4)-RuvB(12)-RuvC(2) complex forms which resolves the HJ. Requires Mg(2+) as cofactor.

The protein resides in the cytoplasm. The enzyme catalyses Endonucleolytic cleavage at a junction such as a reciprocal single-stranded crossover between two homologous DNA duplexes (Holliday junction).. Its function is as follows. The RuvA-RuvB-RuvC complex processes Holliday junction (HJ) DNA during genetic recombination and DNA repair. Endonuclease that resolves HJ intermediates. Cleaves cruciform DNA by making single-stranded nicks across the HJ at symmetrical positions within the homologous arms, yielding a 5'-phosphate and a 3'-hydroxyl group; requires a central core of homology in the junction. The consensus cleavage sequence is 5'-(A/T)TT(C/G)-3'. Cleavage occurs on the 3'-side of the TT dinucleotide at the point of strand exchange. HJ branch migration catalyzed by RuvA-RuvB allows RuvC to scan DNA until it finds its consensus sequence, where it cleaves and resolves the cruciform DNA. In Haemophilus ducreyi (strain 35000HP / ATCC 700724), this protein is Crossover junction endodeoxyribonuclease RuvC.